We begin with the raw amino-acid sequence, 100 residues long: Urease subunit gamma (100 aa).

This sequence belongs to the urease gamma subunit family. In terms of assembly, heterotrimer of UreA (gamma), UreB (beta) and UreC (alpha) subunits. Three heterotrimers associate to form the active enzyme.

The protein localises to the cytoplasm. The enzyme catalyses urea + 2 H2O + H(+) = hydrogencarbonate + 2 NH4(+). It participates in nitrogen metabolism; urea degradation; CO(2) and NH(3) from urea (urease route): step 1/1. The polypeptide is Urease subunit gamma (Streptomyces coelicolor (strain ATCC BAA-471 / A3(2) / M145)).